Reading from the N-terminus, the 79-residue chain is DNA-directed RNA polymerase subunit omega (79 aa).

It belongs to the RNA polymerase subunit omega family. In cyanobacteria the RNAP catalytic core is composed of 2 alpha, 1 beta, 1 beta', 1 gamma and 1 omega subunit. When a sigma factor is associated with the core the holoenzyme is formed, which can initiate transcription.

The catalysed reaction is RNA(n) + a ribonucleoside 5'-triphosphate = RNA(n+1) + diphosphate. In terms of biological role, promotes RNA polymerase assembly. Latches the N- and C-terminal regions of the beta' subunit thereby facilitating its interaction with the beta and alpha subunits. This is DNA-directed RNA polymerase subunit omega from Synechococcus sp. (strain JA-3-3Ab) (Cyanobacteria bacterium Yellowstone A-Prime).